A 118-amino-acid chain; its full sequence is Small ribosomal subunit protein uS13 (118 aa).

The segment at 96–118 is disordered; it reads PLRGQRTRTNARTRKGPRKAIKK.

It belongs to the universal ribosomal protein uS13 family. In terms of assembly, part of the 30S ribosomal subunit. Forms a loose heterodimer with protein S19. Forms two bridges to the 50S subunit in the 70S ribosome.

In terms of biological role, located at the top of the head of the 30S subunit, it contacts several helices of the 16S rRNA. In the 70S ribosome it contacts the 23S rRNA (bridge B1a) and protein L5 of the 50S subunit (bridge B1b), connecting the 2 subunits; these bridges are implicated in subunit movement. Contacts the tRNAs in the A and P-sites. The sequence is that of Small ribosomal subunit protein uS13 from Stenotrophomonas maltophilia (strain K279a).